The chain runs to 359 residues: S-adenosylmethionine-dependent nucleotide dehydratase RSAD2 (359 aa).

A disordered region spans residues Q43–F67. Residues S50–S63 show a composition bias toward basic and acidic residues. Residues F67–L287 form the Radical SAM core domain. 3 residues coordinate [4Fe-4S] cluster: C81, C85, and C88.

It belongs to the radical SAM superfamily. RSAD2 family. It depends on [4Fe-4S] cluster as a cofactor.

It is found in the endoplasmic reticulum membrane. Interferon-inducible iron-sulfur (4FE-4S) cluster-binding antiviral protein which plays a major role in the cell antiviral state induced by type I and type II interferon. In Danio rerio (Zebrafish), this protein is S-adenosylmethionine-dependent nucleotide dehydratase RSAD2.